A 244-amino-acid chain; its full sequence is Lectin (244 aa).

The tract at residues 1–20 is disordered; it reads TETETTSFSIPKTDQPSSPK.

Belongs to the leguminous lectin family. In terms of assembly, homodimer. In contrast to other Lathyrus lectins which are tetramer of two alpha and two beta chains.

The protein is Lectin of Lathyrus sphaericus (Spring vetchling).